Here is a 124-residue protein sequence, read N- to C-terminus: Succinate dehydrogenase cytochrome b556 subunit (124 aa).

Residues 1–29 (MTKIKQEIYNKRPTSPHLTIYKPQISSTL) lie on the Cytoplasmic side of the membrane. A helical membrane pass occupies residues 30–55 (SILHRMTGVALFFVVSILVWWLILSK). The Periplasmic portion of the chain corresponds to 56-67 (YDNNYLQLASCC). The chain crosses the membrane as a helical span at residues 68–88 (IIKICLVAFSYSWCYHLCNGI). His83 is a binding site for heme. The Cytoplasmic portion of the chain corresponds to 89–103 (RHLFWDIGYGFSIKA). The chain crosses the membrane as a helical span at residues 104 to 124 (VNITGWCVVVCSILLTMLLWV).

The protein belongs to the cytochrome b560 family. As to quaternary structure, part of an enzyme complex containing four subunits: a flavoprotein, an iron-sulfur protein, plus two membrane-anchoring proteins, SdhC and SdhD. The complex can form homotrimers. Heme is required as a cofactor.

It is found in the cell inner membrane. The protein operates within carbohydrate metabolism; tricarboxylic acid cycle. In terms of biological role, membrane-anchoring subunit of succinate dehydrogenase (SDH). The chain is Succinate dehydrogenase cytochrome b556 subunit (sdhC) from Rickettsia prowazekii (strain Madrid E).